The following is a 26-amino-acid chain: uncharacterized protein (26 aa).

A compositionally biased stretch (polar residues) spans 1–16 (MPEQKANCSPNGNITV). The tract at residues 1–26 (MPEQKANCSPNGNITVDSMIMSLGSS) is disordered.

This is an uncharacterized protein from Saccharomyces cerevisiae (strain ATCC 204508 / S288c) (Baker's yeast).